The sequence spans 192 residues: Cell division protein SepF (192 aa).

Residues 15 to 70 are disordered; sequence GDPLEYEEDGEEYEQVYREENKREEARRATAGTAAAATPTAAAQASDAAPMGSGPA. Residues 18 to 28 are compositionally biased toward acidic residues; sequence LEYEEDGEEYE. Residues 29-42 are compositionally biased toward basic and acidic residues; sequence QVYREENKREEARR. The span at 43–63 shows a compositional bias: low complexity; sequence ATAGTAAAATPTAAAQASDAA.

The protein belongs to the SepF family. As to quaternary structure, homodimer. Interacts with FtsZ.

The protein localises to the cytoplasm. Functionally, cell division protein that is part of the divisome complex and is recruited early to the Z-ring. Probably stimulates Z-ring formation, perhaps through the cross-linking of FtsZ protofilaments. Its function overlaps with FtsA. The polypeptide is Cell division protein SepF (Gloeobacter violaceus (strain ATCC 29082 / PCC 7421)).